A 281-amino-acid chain; its full sequence is Phosphonates import ATP-binding protein PhnC (281 aa).

The region spanning 5–253 (IEVCGLTKSF…MLRDLYGTEA (249 aa)) is the ABC transporter domain. 38 to 45 (GASGSGKS) lines the ATP pocket.

The protein belongs to the ABC transporter superfamily. Phosphonates importer (TC 3.A.1.9.1) family. In terms of assembly, the complex is composed of two ATP-binding proteins (PhnC), two transmembrane proteins (PhnE) and a solute-binding protein (PhnD).

The protein resides in the cell inner membrane. The catalysed reaction is phosphonate(out) + ATP + H2O = phosphonate(in) + ADP + phosphate + H(+). Part of the ABC transporter complex PhnCDE involved in phosphonates import. Responsible for energy coupling to the transport system. In Cupriavidus pinatubonensis (strain JMP 134 / LMG 1197) (Cupriavidus necator (strain JMP 134)), this protein is Phosphonates import ATP-binding protein PhnC.